Reading from the N-terminus, the 404-residue chain is Cysteine desulfurase IscS (404 aa).

Pyridoxal 5'-phosphate is bound by residues A75–T76, N155, Q183, and S203–H205. An N6-(pyridoxal phosphate)lysine modification is found at K206. T243 contributes to the pyridoxal 5'-phosphate binding site. C328 acts as the Cysteine persulfide intermediate in catalysis. A [2Fe-2S] cluster-binding site is contributed by C328.

It belongs to the class-V pyridoxal-phosphate-dependent aminotransferase family. NifS/IscS subfamily. Homodimer. Forms a heterotetramer with IscU, interacts with other sulfur acceptors. Requires pyridoxal 5'-phosphate as cofactor.

Its subcellular location is the cytoplasm. It catalyses the reaction (sulfur carrier)-H + L-cysteine = (sulfur carrier)-SH + L-alanine. The protein operates within cofactor biosynthesis; iron-sulfur cluster biosynthesis. Its function is as follows. Master enzyme that delivers sulfur to a number of partners involved in Fe-S cluster assembly, tRNA modification or cofactor biosynthesis. Catalyzes the removal of elemental sulfur atoms from cysteine to produce alanine. Functions as a sulfur delivery protein for Fe-S cluster synthesis onto IscU, an Fe-S scaffold assembly protein, as well as other S acceptor proteins. The polypeptide is Cysteine desulfurase IscS (Tolumonas auensis (strain DSM 9187 / NBRC 110442 / TA 4)).